A 76-amino-acid chain; its full sequence is Cytochrome c oxidase subunit 6C (76 aa).

The Mitochondrial matrix segment spans residues 4–22 (GALLPKPQMRGLLAKRLRV). The chain crosses the membrane as a helical span at residues 23-44 (HIAGAFIVALGVAAAYKFGVAE). Topologically, residues 45–76 (PRKKAYAEFYRNYDSMKDFEEMRKAGIFQSAK) are mitochondrial intermembrane.

The protein belongs to the cytochrome c oxidase subunit 6c family. In terms of assembly, component of the cytochrome c oxidase (complex IV, CIV), a multisubunit enzyme composed of 14 subunits. The complex is composed of a catalytic core of 3 subunits MT-CO1, MT-CO2 and MT-CO3, encoded in the mitochondrial DNA, and 11 supernumerary subunits COX4I, COX5A, COX5B, COX6A, COX6B, COX6C, COX7A, COX7B, COX7C, COX8 and NDUFA4, which are encoded in the nuclear genome. The complex exists as a monomer or a dimer and forms supercomplexes (SCs) in the inner mitochondrial membrane with NADH-ubiquinone oxidoreductase (complex I, CI) and ubiquinol-cytochrome c oxidoreductase (cytochrome b-c1 complex, complex III, CIII), resulting in different assemblies (supercomplex SCI(1)III(2)IV(1) and megacomplex MCI(2)III(2)IV(2)). Post-translationally, acetylation of Lys-61 is observed in liver mitochondria from fasted mice but not from fed mice.

Its subcellular location is the mitochondrion inner membrane. It functions in the pathway energy metabolism; oxidative phosphorylation. Functionally, component of the cytochrome c oxidase, the last enzyme in the mitochondrial electron transport chain which drives oxidative phosphorylation. The respiratory chain contains 3 multisubunit complexes succinate dehydrogenase (complex II, CII), ubiquinol-cytochrome c oxidoreductase (cytochrome b-c1 complex, complex III, CIII) and cytochrome c oxidase (complex IV, CIV), that cooperate to transfer electrons derived from NADH and succinate to molecular oxygen, creating an electrochemical gradient over the inner membrane that drives transmembrane transport and the ATP synthase. Cytochrome c oxidase is the component of the respiratory chain that catalyzes the reduction of oxygen to water. Electrons originating from reduced cytochrome c in the intermembrane space (IMS) are transferred via the dinuclear copper A center (CU(A)) of subunit 2 and heme A of subunit 1 to the active site in subunit 1, a binuclear center (BNC) formed by heme A3 and copper B (CU(B)). The BNC reduces molecular oxygen to 2 water molecules using 4 electrons from cytochrome c in the IMS and 4 protons from the mitochondrial matrix. In Mus musculus (Mouse), this protein is Cytochrome c oxidase subunit 6C (Cox6c).